We begin with the raw amino-acid sequence, 1084 residues long: MTNTIPNWIKLNNEIMIQKDGKYQFEKDKEAVHSYFVDYINQNTVFFHDLKEKLDYLIKNDYYEEEFLSKYTFEQIKSIYKIAYSYKFRFPSFMSAFKFYNDYALKTNDKTKILERYEDRVSIVALYCADGDYEKAVEEVHTMMKQEYQPATPTFLNAGRKRRGEMVSCFLLEVGDSLNDISRAIDISMQLSKLGGGVALNLNKLRAKGEAIKDVENATKGVVGVMKLLDNAFRYADQMGQRQGSGAVYLSVFHPDITDFLDTKKISADEDVRVKTLSIGVVVPDKFIELAREDKDYYMFYPHSVYKEYGQYLDELDINEMYDELVENPRVRKAKGNARKLLEQLAILRSESGYPYIMFADNVNKVHPNEHISKVKFSNLCVTGETLLLTENGYEKAADLYKKQNDLKVVIDNRTKDFAVGSKGTTIVDAIPMQLTKKDAEIFKVKTKQGYEIRATEWHKFYVKRDGEIQKLQLNQLKTGDKLLVQSAEGAYGKIHEPDLAYIMGIIAGDGTITEKTAKIYLYDNKKVLEQKVTDAVHRIIQKHKVDRAYKHNTSLLPTFNMANPEKQDLLYMNSTVLFDILKKFGMNKETKTRVPEFIFQANKETQAAYLSGLFQTDGCVNANHKAKALTIELTSIHYESLQDVQKLLLNMGVYTTIYSNNKRSQELLPDGKGGSKLYNVKPTHKISIQDRNSRELFMSIVEMKEYDVYKFNLLTETLQPKSRKPKHDFTAEIISIEEDGVEDVYDTTQEDYHSLIFNGIVTGNCSEVLQSSQVSVYTDYDKEDEIGLDISCNLGSMNIVNVMSNQSIASTVRIAIDSLTTVTRKTNIVNAPAVARANTLMRSIGLGQMNLHGFLAQNNIAYESEEAKDFANTYFMMVNFYSLQRSMEIARETGETYYKFDGSTYKSGEYFEKYVTNDYSPQYEKVKKLFGDQHIPNIQDWMKLKEDVMKYGLYHSYRQAIAPTGSISYVQSSTAGVMPIMERIEERTYGNSKTYYPMPGLSAQNWFFYKEAYDMDMFKVVDLIATIQQHVDQGISFTLFLKDTMTTRDLNRIDLYAHHRGIKTLYYARTKDTTQEGCLSCVV.

Residues threonine 152, 168-169 (SC), and glycine 197 each bind substrate. A disulfide bond links cysteine 169 and cysteine 793. The active-site Proton acceptor is the asparagine 379. Catalysis depends on cysteine 381, which acts as the Cysteine radical intermediate. Positions 503–654 (IMGIIAGDGT…VQKLLLNMGV (152 aa)) constitute a DOD-type homing endonuclease domain. The active-site Proton acceptor is the glutamate 768. 964-968 (PTGSI) contributes to the substrate binding site.

The protein belongs to the ribonucleoside diphosphate reductase large chain family. As to quaternary structure, tetramer of two alpha and two beta subunits. Post-translationally, this protein undergoes protein self-splicing that involves post-translational excision of the intervening region (intein) followed by peptide ligation.

The enzyme catalyses a 2'-deoxyribonucleoside 5'-diphosphate + [thioredoxin]-disulfide + H2O = a ribonucleoside 5'-diphosphate + [thioredoxin]-dithiol. With respect to regulation, under complex allosteric control mediated by deoxynucleoside triphosphates and ATP binding. The type of nucleotide bound at the specificity site determines substrate preference. It seems probable that ATP makes the enzyme reduce CDP and UDP, dGTP favors ADP reduction and dTTP favors GDP reduction. In terms of biological role, provides the precursors necessary for DNA synthesis. Catalyzes the biosynthesis of deoxyribonucleotides from the corresponding ribonucleotides. In Bacillus subtilis (strain 168), this protein is Ribonucleoside-diphosphate reductase NrdEB subunit alpha (nrdEB).